The chain runs to 662 residues: MLNKNSASSQSLPRVHSFFNMIPSIMQDDLALTILNDRDNMFSIKSQRSHGEDLIVTPFAQILASLRSVRNNLLSLTNVPASNKSRRPNQSSSASRSGNPPGAPLSQGEEAYTRLATDTIEELDWCLDQLETIQTHRSVSDMASLKFKRMLNKELSHFSESSRSGNQISEYICSTFLDKQQEFDLPSLRVEDNPELVAANAAAGQQSAGQYARSRSPRGPPMSQISGVKRPLSHTNSFTGERLPTFGVETPRENELGTLLGELDTWGIQIFSIGEFSVNRPLTCVAYTIFQSRELLTSLMIPPKTFLNFMSTLEDHYVKDNPFHNSLHAADVTQSTNVLLNTPALEGVFTPLEVGGALFAACIHDVDHPGLTNQFLVNSSSELALMYNDESVLENHHLAVAFKLLQNQGCDIFCNMQKKQRQTLRKMVIDIVLSTDMSKHMSLLADLKTMVETKKVAGSGVLLLDNYTDRIQVLENLVHCADLSNPTKPLPLYKRWVALLMEEFFLQGDKERESGMDISPMCDRHNATIEKSQVGFIDYIVHPLWETWADLVHPDAQDILDTLEENRDYYQSMIPPSPPPSGVDENPQEDRIRFQVTLEESDQENLAELEEGDESGGESTTTGTTGTTAASALSGAGGGGGGGGGMAPRTGGCQNQPQHGGM.

Disordered stretches follow at residues Val-79 to Gly-108 and Ser-207 to Thr-245. Over residues Pro-80–Gly-98 the composition is skewed to polar residues. The region spanning Val-248–Ser-577 is the PDEase domain. The active-site Proton donor is His-324. His-324–His-328 is a 3',5'-cyclic AMP binding site. The a divalent metal cation site is built by His-328, His-364, Asp-365, and Asp-482. 3',5'-cyclic AMP-binding residues include Asp-365, Asp-482, and Gln-533. The span at Glu-599–Gly-616 shows a compositional bias: acidic residues. The segment at Glu-599–Met-662 is disordered. Residues Gly-617–Ser-634 show a composition bias toward low complexity. A compositionally biased stretch (gly residues) spans Gly-635–Met-646. Polar residues predominate over residues Gly-652–Met-662.

Belongs to the cyclic nucleotide phosphodiesterase family. PDE4 subfamily. Monomer. Requires a divalent metal cation as cofactor.

The enzyme catalyses 3',5'-cyclic AMP + H2O = AMP + H(+). It functions in the pathway purine metabolism; 3',5'-cyclic AMP degradation; AMP from 3',5'-cyclic AMP: step 1/1. Its function is as follows. Hydrolyzes the second messenger cAMP, which is a key regulator of many important physiological processes. Vital for female fertility. Required for learning/memory. This chain is 3',5'-cyclic-AMP phosphodiesterase, isoform F, found in Drosophila melanogaster (Fruit fly).